Reading from the N-terminus, the 227-residue chain is Cytochrome c oxidase subunit 2 (227 aa).

The Mitochondrial intermembrane segment spans residues 1-14 (MAYPFQLGLQDATS). Residues 15 to 45 (PIMEELANFHDHTLMIVFLISSLVLYIISSM) form a helical membrane-spanning segment. Over 46 to 59 (LTTKLTHTSTMDAQ) the chain is Mitochondrial matrix. The helical transmembrane segment at 60–87 (EVETIWTILPAVILILIALPSLRILYMM) threads the bilayer. Topologically, residues 88–227 (DEINNPALTV…HFENWSASMI (140 aa)) are mitochondrial intermembrane. Residues His-161, Cys-196, Glu-198, Cys-200, His-204, and Met-207 each contribute to the Cu cation site. Glu-198 is a binding site for Mg(2+).

It belongs to the cytochrome c oxidase subunit 2 family. Component of the cytochrome c oxidase (complex IV, CIV), a multisubunit enzyme composed of 14 subunits. The complex is composed of a catalytic core of 3 subunits MT-CO1, MT-CO2 and MT-CO3, encoded in the mitochondrial DNA, and 11 supernumerary subunits COX4I, COX5A, COX5B, COX6A, COX6B, COX6C, COX7A, COX7B, COX7C, COX8 and NDUFA4, which are encoded in the nuclear genome. The complex exists as a monomer or a dimer and forms supercomplexes (SCs) in the inner mitochondrial membrane with NADH-ubiquinone oxidoreductase (complex I, CI) and ubiquinol-cytochrome c oxidoreductase (cytochrome b-c1 complex, complex III, CIII), resulting in different assemblies (supercomplex SCI(1)III(2)IV(1) and megacomplex MCI(2)III(2)IV(2)). Found in a complex with TMEM177, COA6, COX18, COX20, SCO1 and SCO2. Interacts with TMEM177 in a COX20-dependent manner. Interacts with COX20. Interacts with COX16. Requires Cu cation as cofactor.

The protein resides in the mitochondrion inner membrane. The enzyme catalyses 4 Fe(II)-[cytochrome c] + O2 + 8 H(+)(in) = 4 Fe(III)-[cytochrome c] + 2 H2O + 4 H(+)(out). In terms of biological role, component of the cytochrome c oxidase, the last enzyme in the mitochondrial electron transport chain which drives oxidative phosphorylation. The respiratory chain contains 3 multisubunit complexes succinate dehydrogenase (complex II, CII), ubiquinol-cytochrome c oxidoreductase (cytochrome b-c1 complex, complex III, CIII) and cytochrome c oxidase (complex IV, CIV), that cooperate to transfer electrons derived from NADH and succinate to molecular oxygen, creating an electrochemical gradient over the inner membrane that drives transmembrane transport and the ATP synthase. Cytochrome c oxidase is the component of the respiratory chain that catalyzes the reduction of oxygen to water. Electrons originating from reduced cytochrome c in the intermembrane space (IMS) are transferred via the dinuclear copper A center (CU(A)) of subunit 2 and heme A of subunit 1 to the active site in subunit 1, a binuclear center (BNC) formed by heme A3 and copper B (CU(B)). The BNC reduces molecular oxygen to 2 water molecules using 4 electrons from cytochrome c in the IMS and 4 protons from the mitochondrial matrix. This is Cytochrome c oxidase subunit 2 (MT-CO2) from Malacomys longipes (Big-eared swamp rat).